The following is a 443-amino-acid chain: EGF-containing fibulin-like extracellular matrix protein 2 (443 aa).

Positions 1–27 are cleaved as a signal peptide; it reads MLPFASCLPGSLLLWAFLLLLLGAASP. Gln28 carries the pyrrolidone carboxylic acid modification. The region spanning 36-81 is the EGF-like 1; atypical domain; sequence YTECTDGYEWDADSQHCRDVNECLTIPEACKGEMKCINHYGGYLCL. Cystine bridges form between Cys58-Cys121, Cys65-Cys80, Cys71-Cys109, Cys127-Cys140, Cys134-Cys149, Cys151-Cys162, Cys168-Cys177, Cys173-Cys186, Cys188-Cys201, Cys207-Cys217, Cys213-Cys226, Cys228-Cys241, Cys247-Cys258, Cys254-Cys267, Cys269-Cys281, Cys287-Cys300, Cys294-Cys309, and Cys315-Cys327. A disordered region spans residues 91 to 117; the sequence is LHGEGPPPPAAHAQQPNPCPQGYEPDE. Positions 123–163 constitute an EGF-like 2; calcium-binding domain; sequence DVDECTQALHDCRPSQDCHNLPGSYQCTCPDGYRKIGPECV. The EGF-like 3; calcium-binding domain occupies 164–202; it reads DIDECRYRYCQHRCVNLPGSFRCQCEPGFQLGPNNRSCV. N-linked (GlcNAc...) asparagine glycosylation occurs at Asn198. Residues 203 to 242 form the EGF-like 4; calcium-binding domain; that stretch reads DVNECDMGAPCEQRCFNSYGTFLCRCNQGYELHRDGFSCS. An EGF-like 5; calcium-binding domain is found at 243-282; that stretch reads DIDECGYSSYLCQYRCVNEPGRFSCHCPQGYQLLATRLCQ. An EGF-like 6; calcium-binding domain is found at 283-328; the sequence is DIDECETGAHQCSEAQTCVNFHGGYRCVDTNRCVEPYVQVSDNRCL. Asn394 is a glycosylation site (N-linked (GlcNAc...) asparagine).

Belongs to the fibulin family. As to quaternary structure, homodimer; disulfide-linked. Multimer; allows heparin binding. Monomer. Binds preferentially to p53 mutants. Interacts with FBN1 (via N-terminal domain); this interaction inhibits EFEMP2 binding to LOX and ELN. Interacts with ELN with moderate affinity; this interaction regulates ELN self-assembly maturation stage. Interacts with PCOLCE. Interacts with collagen type IV trimer (COL4A1-COL4A1-COL4A2), NID2 and moderately with COL15A1-derived endostatin. Interacts with EMILIN1; this interaction promotes the incorporation of EFEMP2 into the extracellular matrix. Interacts with LTBP4; the LTBP4 long form (LTBP4L) has a stronger binding affinity than the LTBP4 short form and the LTBP4 long form promotes fibrillar deposition of EFEMP2. Interacts with LOX (via propeptide); this interaction is strong and facilitates formation of ternary complexes with ELN during elastic fiber assembly; this interaction limits interaction of EFEMP2 with FBLN5. Interacts with PITX2. Interacts with FBLN5 with moderate affinity. Interacts with LOXL1 (via propeptide), LTBP1 and TGFB1 stronger than with LOXL2 and LTBP3. N-glycosylated; contains mostly complex-type glycans. Not O-glycosylated. Post-translationally, cleaved by ELANE; produces a 50-55 kDa fragment. Cleaved by MMP2 and MMP9; produces several fragments. As to expression, expressed in elastic fibers of the skin, near the dermal-epidermal junction, surrounding the hair follicles and throughout the dermis. Expressed in tendon around tenocytes. Prominently expressed in cartilage, bone, perichondrium and ligaments. Also detected in bone marrow stroma. Expressed in aorta, lung, and esophagus.

The protein localises to the secreted. It is found in the extracellular space. Its subcellular location is the extracellular matrix. It localises to the basement membrane. In terms of biological role, plays a crucial role in elastic fiber formation in tissue, and in the formation of ultrastructural connections between elastic laminae and smooth muscle cells in the aorta, therefore participates in terminal differentiation and maturation of smooth muscle cell (SMC) and in the mechanical properties and wall integrity maintenance of the aorta. In addition, is involved in the control of collagen fibril assembly in tissue throught proteolytic activation of LOX leading to cross- linking of collagen and elastin. Also promotes ELN coacervation and participates in the deposition of ELN coacervates on to microfibrils but also regulates ELN cross- linking through LOX interaction. Moreover adheres to the cells through heparin binding in a calcium-dependent manner and regulates vascularlar smooth muscle cells proliferation through angiotensin signaling. The sequence is that of EGF-containing fibulin-like extracellular matrix protein 2 from Mus musculus (Mouse).